We begin with the raw amino-acid sequence, 196 residues long: Pyridoxal 5'-phosphate synthase subunit PdxT (196 aa).

L-glutamine is bound at residue 47-49 (GES). The Nucleophile role is filled by cysteine 79. L-glutamine is bound by residues arginine 106 and 134–135 (IR). Active-site charge relay system residues include histidine 170 and glutamate 172.

The protein belongs to the glutaminase PdxT/SNO family. As to quaternary structure, in the presence of PdxS, forms a dodecamer of heterodimers. Only shows activity in the heterodimer.

It catalyses the reaction aldehydo-D-ribose 5-phosphate + D-glyceraldehyde 3-phosphate + L-glutamine = pyridoxal 5'-phosphate + L-glutamate + phosphate + 3 H2O + H(+). The enzyme catalyses L-glutamine + H2O = L-glutamate + NH4(+). The protein operates within cofactor biosynthesis; pyridoxal 5'-phosphate biosynthesis. In terms of biological role, catalyzes the hydrolysis of glutamine to glutamate and ammonia as part of the biosynthesis of pyridoxal 5'-phosphate. The resulting ammonia molecule is channeled to the active site of PdxS. The sequence is that of Pyridoxal 5'-phosphate synthase subunit PdxT from Bacillus cereus (strain Q1).